A 296-amino-acid chain; its full sequence is 4-hydroxybenzoate octaprenyltransferase (296 aa).

The next 8 helical transmembrane spans lie at 23–43, 46–66, 99–119, 141–161, 163–183, 211–231, 237–257, and 265–285; these read IGIL…SPGW, GLVL…GCVM, LALA…PLVV, IPQA…FAAI, GQLP…AIAY, DVFA…WVGV, WPYF…YALI, and CFKA…GVLA.

The protein belongs to the UbiA prenyltransferase family. Requires Mg(2+) as cofactor.

It is found in the cell inner membrane. The catalysed reaction is all-trans-octaprenyl diphosphate + 4-hydroxybenzoate = 4-hydroxy-3-(all-trans-octaprenyl)benzoate + diphosphate. It participates in cofactor biosynthesis; ubiquinone biosynthesis. In terms of biological role, catalyzes the prenylation of para-hydroxybenzoate (PHB) with an all-trans polyprenyl group. Mediates the second step in the final reaction sequence of ubiquinone-8 (UQ-8) biosynthesis, which is the condensation of the polyisoprenoid side chain with PHB, generating the first membrane-bound Q intermediate 3-octaprenyl-4-hydroxybenzoate. This is 4-hydroxybenzoate octaprenyltransferase from Methylobacillus flagellatus (strain ATCC 51484 / DSM 6875 / VKM B-1610 / KT).